A 502-amino-acid chain; its full sequence is Xyloglucan-specific endo-beta-1,4-glucanase BoGH5A (502 aa).

The signal sequence occupies residues 1 to 32 (MEKQSFSDGLFSPLGIKRVIFMLVLLTTSFIS). The N-palmitoyl cysteine moiety is linked to residue Cys-33. Cys-33 is lipidated: S-diacylglycerol cysteine. The region spanning 67–127 (GPAEWHISTS…PDIIINVKQS (61 aa)) is the BACON domain. Residues Asn-165, Val-172, His-251, and Asn-296 each coordinate substrate. Glu-297 functions as the Proton donor in the catalytic mechanism. Residue Glu-430 is the Nucleophile of the active site. Trp-472 contacts substrate.

This sequence belongs to the glycosyl hydrolase 5 (cellulase A) family.

It is found in the cell outer membrane. The enzyme catalyses xyloglucan + H2O = xyloglucan oligosaccharides.. The protein operates within glucan metabolism; xyloglucan degradation. Its function is as follows. Catalyzes endohydrolysis of 1,4-beta-D-glucosidic linkages in xyloglucan with retention of the beta-configuration of the glycosyl residues in xyloglucan degradation. Cleaves the backbone of the 3 major types of natural xyloglucans (seed galactoxyloglucan from tamarind kernel, dicot fucogalactoxyloglucan from lettuce leaves, and solanaceous arabinogalactoxyloglucan from tomato fruit), to produce xyloglucan oligosaccharides. This Bacteroides ovatus (strain ATCC 8483 / DSM 1896 / JCM 5824 / BCRC 10623 / CCUG 4943 / NCTC 11153) protein is Xyloglucan-specific endo-beta-1,4-glucanase BoGH5A.